The sequence spans 96 residues: MKCFAQIVVLLLVIAFSHGAVITGVRDRDAQCGSGTCCAASAFSRNIRFCVPLGNNGEECHPASHKVPYNGKRLSSLCPCNTGLTCSKSGEKYQCS.

The first 19 residues, 1–19, serve as a signal peptide directing secretion; it reads MKCFAQIVVLLLVIAFSHG. Cystine bridges form between cysteine 32-cysteine 50, cysteine 37-cysteine 78, cysteine 60-cysteine 86, and cysteine 80-cysteine 95.

Belongs to the AVIT (prokineticin) family. As to expression, expressed by the skin glands.

The protein localises to the secreted. Functionally, potent agonist for both PKR1/PROKR1 and PKR2/PROKR2, and inducer of a potent and long-lasting hyperalgesia. Also potentiates capsaicin-induced TRPV1 current, when tested on DRG neurons. At subnanomolar concentrations, this protein both induces potent chemotaxis of macrophages and stimulates LPS-induced production of the pro-inflammatory cytokines IL-1 and IL-12. In vivo, potently stimulates the contraction of the guinea-pig gastrointestinal (GI) smooth muscle (nanomolar concentration). This chain is Prokineticin Bm8-b, found in Bombina maxima (Giant fire-bellied toad).